An 89-amino-acid polypeptide reads, in one-letter code: Small ribosomal subunit protein uS15 (89 aa).

It belongs to the universal ribosomal protein uS15 family. Part of the 30S ribosomal subunit. Forms a bridge to the 50S subunit in the 70S ribosome, contacting the 23S rRNA.

One of the primary rRNA binding proteins, it binds directly to 16S rRNA where it helps nucleate assembly of the platform of the 30S subunit by binding and bridging several RNA helices of the 16S rRNA. In terms of biological role, forms an intersubunit bridge (bridge B4) with the 23S rRNA of the 50S subunit in the ribosome. The sequence is that of Small ribosomal subunit protein uS15 from Anaeromyxobacter sp. (strain Fw109-5).